The chain runs to 397 residues: Acetate kinase 1 (397 aa).

A Mg(2+)-binding site is contributed by asparagine 8. Position 15 (lysine 15) interacts with ATP. Arginine 89 contacts substrate. Aspartate 146 acts as the Proton donor/acceptor in catalysis. Residues 206–210, 281–283, and 329–333 contribute to the ATP site; these read HLGNG, DLR, and GIGEN. Residue glutamate 382 participates in Mg(2+) binding.

Belongs to the acetokinase family. Homodimer. Mg(2+) serves as cofactor. Mn(2+) is required as a cofactor.

Its subcellular location is the cytoplasm. It catalyses the reaction acetate + ATP = acetyl phosphate + ADP. It participates in metabolic intermediate biosynthesis; acetyl-CoA biosynthesis; acetyl-CoA from acetate: step 1/2. Functionally, catalyzes the formation of acetyl phosphate from acetate and ATP. Can also catalyze the reverse reaction. The sequence is that of Acetate kinase 1 from Listeria innocua serovar 6a (strain ATCC BAA-680 / CLIP 11262).